The following is a 539-amino-acid chain: Transcription factor LG2 (539 aa).

Over residues 115 to 125 (MRQQQQLHSGN) the composition is skewed to polar residues. Disordered regions lie at residues 115 to 140 (MRQQ…SAQN) and 181 to 246 (KPGL…KSRL). 2 stretches are compositionally biased toward low complexity: residues 126–137 (SQSVGSTTDSSS) and 192–205 (QQQH…QQQL). The span at 219–242 (TRKDGKSVDAKTERRLAQNREAAR) shows a compositional bias: basic and acidic residues. In terms of domain architecture, bZIP spans 227 to 271 (DAKTERRLAQNREAARKSRLRKKAYVQNLETSRVRLQQIEQELQR). Positions 229–249 (KTERRLAQNREAARKSRLRKK) are basic motif. Positions 255 to 269 (LETSRVRLQQIEQEL) are leucine-zipper. The DOG1 domain occupies 292-506 (AAMFDMEYAR…RALSNLWSSR (215 aa)). The interval 513-539 (GTESVSPTGTELQPMHNQPQQNQYSGF) is disordered.

Belongs to the bZIP family. Interacts with NPR1/NH1 and NPR3/NH3.

It is found in the nucleus. Functionally, transcriptional regulator involved in defense response. Acts as a transcriptional activator in vitro. In Oryza sativa subsp. japonica (Rice), this protein is Transcription factor LG2.